A 346-amino-acid polypeptide reads, in one-letter code: Isopentenyl-diphosphate delta-isomerase (346 aa).

Arg-12–Lys-13 is a substrate binding site. FMN contacts are provided by residues Ala-67 to Thr-69, Ser-97, and Asn-126. Ser-97–Arg-99 serves as a coordination point for substrate. Residue Gln-156 participates in substrate binding. Glu-157 contributes to the Mg(2+) binding site. FMN contacts are provided by residues Lys-188, Thr-218, Gly-263–Arg-265, and Ala-284–Gly-285.

This sequence belongs to the IPP isomerase type 2 family. As to quaternary structure, homooctamer. Dimer of tetramers. It depends on FMN as a cofactor. The cofactor is NADPH. Mg(2+) serves as cofactor.

Its subcellular location is the cytoplasm. The catalysed reaction is isopentenyl diphosphate = dimethylallyl diphosphate. Functionally, involved in the biosynthesis of isoprenoids. Catalyzes the 1,3-allylic rearrangement of the homoallylic substrate isopentenyl (IPP) to its allylic isomer, dimethylallyl diphosphate (DMAPP). The chain is Isopentenyl-diphosphate delta-isomerase from Moorella thermoacetica (strain ATCC 39073 / JCM 9320).